The sequence spans 428 residues: Enolase (428 aa).

Gln163 serves as a coordination point for (2R)-2-phosphoglycerate. The Proton donor role is filled by Glu205. Mg(2+) contacts are provided by Asp242, Glu285, and Asp312. Lys337, Arg366, Ser367, and Lys388 together coordinate (2R)-2-phosphoglycerate. Lys337 (proton acceptor) is an active-site residue.

The protein belongs to the enolase family. Requires Mg(2+) as cofactor.

It localises to the cytoplasm. Its subcellular location is the secreted. The protein localises to the cell surface. The enzyme catalyses (2R)-2-phosphoglycerate = phosphoenolpyruvate + H2O. It participates in carbohydrate degradation; glycolysis; pyruvate from D-glyceraldehyde 3-phosphate: step 4/5. In terms of biological role, catalyzes the reversible conversion of 2-phosphoglycerate (2-PG) into phosphoenolpyruvate (PEP). It is essential for the degradation of carbohydrates via glycolysis. The polypeptide is Enolase (Neisseria gonorrhoeae (strain ATCC 700825 / FA 1090)).